The sequence spans 95 residues: Aspartyl/glutamyl-tRNA(Asn/Gln) amidotransferase subunit C (95 aa).

This sequence belongs to the GatC family. In terms of assembly, heterotrimer of A, B and C subunits.

The catalysed reaction is L-glutamyl-tRNA(Gln) + L-glutamine + ATP + H2O = L-glutaminyl-tRNA(Gln) + L-glutamate + ADP + phosphate + H(+). It catalyses the reaction L-aspartyl-tRNA(Asn) + L-glutamine + ATP + H2O = L-asparaginyl-tRNA(Asn) + L-glutamate + ADP + phosphate + 2 H(+). Allows the formation of correctly charged Asn-tRNA(Asn) or Gln-tRNA(Gln) through the transamidation of misacylated Asp-tRNA(Asn) or Glu-tRNA(Gln) in organisms which lack either or both of asparaginyl-tRNA or glutaminyl-tRNA synthetases. The reaction takes place in the presence of glutamine and ATP through an activated phospho-Asp-tRNA(Asn) or phospho-Glu-tRNA(Gln). The sequence is that of Aspartyl/glutamyl-tRNA(Asn/Gln) amidotransferase subunit C from Chlorobaculum tepidum (strain ATCC 49652 / DSM 12025 / NBRC 103806 / TLS) (Chlorobium tepidum).